The following is a 128-amino-acid chain: Ribosome-binding factor A (128 aa).

This sequence belongs to the RbfA family. In terms of assembly, monomer. Binds 30S ribosomal subunits, but not 50S ribosomal subunits or 70S ribosomes.

The protein resides in the cytoplasm. Functionally, one of several proteins that assist in the late maturation steps of the functional core of the 30S ribosomal subunit. Associates with free 30S ribosomal subunits (but not with 30S subunits that are part of 70S ribosomes or polysomes). Required for efficient processing of 16S rRNA. May interact with the 5'-terminal helix region of 16S rRNA. The protein is Ribosome-binding factor A of Rickettsia prowazekii (strain Madrid E).